Here is a 102-residue protein sequence, read N- to C-terminus: Large ribosomal subunit protein bL28 (102 aa).

Residues 1 to 20 are disordered; sequence MSRRCELTAKGPQVGHKVSH.

The protein belongs to the bacterial ribosomal protein bL28 family.

This is Large ribosomal subunit protein bL28 from Bradyrhizobium sp. (strain BTAi1 / ATCC BAA-1182).